We begin with the raw amino-acid sequence, 70 residues long: Ribosome modulation factor (70 aa).

Belongs to the ribosome modulation factor family.

It is found in the cytoplasm. During stationary phase, converts 70S ribosomes to an inactive dimeric form (100S ribosomes). This chain is Ribosome modulation factor, found in Marinobacter adhaerens (strain DSM 23420 / HP15).